The primary structure comprises 101 residues: Large ribosomal subunit protein uL24 (101 aa).

Belongs to the universal ribosomal protein uL24 family. In terms of assembly, part of the 50S ribosomal subunit.

Functionally, one of two assembly initiator proteins, it binds directly to the 5'-end of the 23S rRNA, where it nucleates assembly of the 50S subunit. Its function is as follows. One of the proteins that surrounds the polypeptide exit tunnel on the outside of the subunit. The polypeptide is Large ribosomal subunit protein uL24 (Elusimicrobium minutum (strain Pei191)).